The following is a 379-amino-acid chain: Chaperone protein DnaJ (379 aa).

Positions 5-70 (DYYESLGVAK…QKRAAYDQYG (66 aa)) constitute a J domain. The segment at 134–212 (GVTKEIRIPA…CHGHGRVEKS (79 aa)) adopts a CR-type zinc-finger fold. The Zn(2+) site is built by Cys-147, Cys-150, Cys-164, Cys-167, Cys-186, Cys-189, Cys-200, and Cys-203. CXXCXGXG motif repeat units lie at residues 147-154 (CDVCHGNG), 164-171 (CPTCHGNG), 186-193 (CPHCHGRG), and 200-207 (CIKCHGHG).

It belongs to the DnaJ family. In terms of assembly, homodimer. The cofactor is Zn(2+).

It localises to the cytoplasm. Functionally, participates actively in the response to hyperosmotic and heat shock by preventing the aggregation of stress-denatured proteins and by disaggregating proteins, also in an autonomous, DnaK-independent fashion. Unfolded proteins bind initially to DnaJ; upon interaction with the DnaJ-bound protein, DnaK hydrolyzes its bound ATP, resulting in the formation of a stable complex. GrpE releases ADP from DnaK; ATP binding to DnaK triggers the release of the substrate protein, thus completing the reaction cycle. Several rounds of ATP-dependent interactions between DnaJ, DnaK and GrpE are required for fully efficient folding. Also involved, together with DnaK and GrpE, in the DNA replication of plasmids through activation of initiation proteins. This Pectobacterium atrosepticum (strain SCRI 1043 / ATCC BAA-672) (Erwinia carotovora subsp. atroseptica) protein is Chaperone protein DnaJ.